A 345-amino-acid polypeptide reads, in one-letter code: Eukaryotic translation initiation factor 3 subunit F (345 aa).

The MPN domain occupies 30–166 (VVIQPQALFS…TRAYISAPVG (137 aa)). The disordered stretch occupies residues 308-345 (GGESGSTESGQRGGQRGGKGGRGGQQRNQERSGEEVRA). Over residues 318 to 331 (QRGGQRGGKGGRGG) the composition is skewed to gly residues. Residues 335 to 345 (NQERSGEEVRA) are compositionally biased toward basic and acidic residues.

This sequence belongs to the eIF-3 subunit F family. In terms of assembly, component of the eukaryotic translation initiation factor 3 (eIF-3) complex.

The protein resides in the cytoplasm. Its function is as follows. Component of the eukaryotic translation initiation factor 3 (eIF-3) complex, which is involved in protein synthesis of a specialized repertoire of mRNAs and, together with other initiation factors, stimulates binding of mRNA and methionyl-tRNAi to the 40S ribosome. The eIF-3 complex specifically targets and initiates translation of a subset of mRNAs involved in cell proliferation. This Aspergillus terreus (strain NIH 2624 / FGSC A1156) protein is Eukaryotic translation initiation factor 3 subunit F.